A 207-amino-acid chain; its full sequence is Cytidylyl-2-hydroxypropylphosphonate hydrolase (207 aa).

CDP contacts are provided by Trp68, Arg74, Gln76, and Ser77. A divalent metal cation contacts are provided by Asn109, Asp125, Glu127, and Asp129. Position 142 (Lys142) interacts with CDP. Residue Lys142 is the Proton donor of the active site. Asp143 is an a divalent metal cation binding site.

It belongs to the FomD family. The cofactor is Mn(2+). It depends on Co(2+) as a cofactor.

The enzyme catalyses cytidine 5'-({hydroxy[(S)-2-hydroxypropyl]phosphonoyl}phosphate) + H2O = (S)-2-hydroxypropylphosphonate + CMP + H(+). It functions in the pathway antibiotic biosynthesis; fosfomycin biosynthesis. With respect to regulation, hydrolysis of (S)-HPP-CMP is inhibited by CDP. Its function is as follows. Involved in fosfomycin biosynthesis. Catalyzes the hydrolysis of cytidylyl (S)-2-hydroxypropylphosphonate ((S)-HPP-CMP) to give (S)-2-hydroxypropylphosphonate ((S)-HPP) and CMP. Can also hydrolyze (R)-HPP-CMP and cytidylyl 2-hydroxyethylphosphonate (HEP-CMP), which is a biosynthetic intermediate before C-methylation, but the catalytic efficiency is much higher with (S)-HPP-CMP. The chain is Cytidylyl-2-hydroxypropylphosphonate hydrolase from Streptomyces fradiae (Streptomyces roseoflavus).